Here is a 70-residue protein sequence, read N- to C-terminus: Brevinin-1PLb (70 aa).

An N-terminal signal peptide occupies residues 1 to 22; it reads MFTTKKSMLLLFFLGTINLSLC. Residues 23–44 constitute a propeptide that is removed on maturation; it reads EEERNAEEERRDEPDEMNVEVE. Cys64 and Cys70 are oxidised to a cystine.

In terms of tissue distribution, expressed by the skin glands.

The protein localises to the secreted. In terms of biological role, antimicrobial activity against the Gram-negative bacterium E.coli, the Gram-positive bacterium S.aureus and the yeast C.albicans. This Lithobates palustris (Pickerel frog) protein is Brevinin-1PLb.